We begin with the raw amino-acid sequence, 393 residues long: Elongation factor Tu (393 aa).

The region spanning lysine 10–valine 203 is the tr-type G domain. A G1 region spans residues glycine 19–threonine 26. GTP is bound at residue glycine 19–threonine 26. Threonine 26 serves as a coordination point for Mg(2+). Positions glycine 60–serine 64 are G2. Residues aspartate 81–glycine 84 form a G3 region. GTP-binding positions include aspartate 81–histidine 85 and asparagine 136–aspartate 139. Residues asparagine 136–aspartate 139 are G4. A G5 region spans residues serine 173–leucine 175.

It belongs to the TRAFAC class translation factor GTPase superfamily. Classic translation factor GTPase family. EF-Tu/EF-1A subfamily. Monomer.

It is found in the cytoplasm. The enzyme catalyses GTP + H2O = GDP + phosphate + H(+). In terms of biological role, GTP hydrolase that promotes the GTP-dependent binding of aminoacyl-tRNA to the A-site of ribosomes during protein biosynthesis. The chain is Elongation factor Tu from Chlorobaculum parvum (strain DSM 263 / NCIMB 8327) (Chlorobium vibrioforme subsp. thiosulfatophilum).